The sequence spans 252 residues: uncharacterized protein (252 aa).

Residues Met-1 to Ala-25 form the signal peptide. Cys-26 is lipidated: N-palmitoyl cysteine. Cys-26 carries the S-diacylglycerol cysteine lipid modification.

This sequence belongs to the MG439/MG440 family.

It localises to the cell membrane. This is an uncharacterized protein from Mycoplasma pneumoniae (strain ATCC 29342 / M129 / Subtype 1) (Mycoplasmoides pneumoniae).